Here is a 547-residue protein sequence, read N- to C-terminus: Sesquiterpene synthase TPS3 (547 aa).

Residues R265, D302, D306, R443, and D446 each contribute to the (2E,6E)-farnesyl diphosphate site. 2 residues coordinate Mg(2+): D302 and D306. Positions 302-306 match the DDXXD motif motif; sequence DDIYD. Mg(2+) contacts are provided by D446, T450, and E454.

It belongs to the terpene synthase family. Tpsb subfamily. Monomer. The cofactor is Mg(2+).

It is found in the cytoplasm. It carries out the reaction (2E,6E)-farnesyl diphosphate = (1S,5S,6R)-alpha-bergamotene + diphosphate. Its pathway is secondary metabolite biosynthesis; terpenoid biosynthesis. In terms of biological role, sesquiterpene synthase involved in the biosynthesis of volatile organic compounds. Mediates the conversion of (2E,6E)-farnesyl diphosphate (FPP) into alpha-bergamotene. Does not use (2E)-geranyl diphosphate (GPP) as substrate. This is Sesquiterpene synthase TPS3 from Cananga odorata (Ylang-ylang tree).